A 73-amino-acid polypeptide reads, in one-letter code: Probable minor pilin MMP0528 (73 aa).

A propeptide spanning residues 1 to 10 (MLKKLYSKKG) is cleaved from the precursor. The QXSXEXXXL motif lies at 11 to 19 (QVSMEMGIL).

The N-terminus is probably cleaved by the prepilin peptidase EppA, which recognizes the class III signal sequence.

The protein resides in the secreted. Its subcellular location is the cell surface. It is found in the fimbrium. This chain is Probable minor pilin MMP0528, found in Methanococcus maripaludis (strain DSM 14266 / JCM 13030 / NBRC 101832 / S2 / LL).